A 130-amino-acid chain; its full sequence is Transcription antitermination protein NusB (130 aa).

The protein belongs to the NusB family.

Functionally, involved in transcription antitermination. Required for transcription of ribosomal RNA (rRNA) genes. Binds specifically to the boxA antiterminator sequence of the ribosomal RNA (rrn) operons. This Bacillus cereus (strain B4264) protein is Transcription antitermination protein NusB.